A 148-amino-acid chain; its full sequence is CASP-like protein 1 (148 aa).

A run of 3 helical transmembrane segments spans residues 31–51 (FIYF…TSLL), 74–94 (VLLL…GYIG), and 121–141 (IAAG…SFFT).

It belongs to the Casparian strip membrane proteins (CASP) family. As to quaternary structure, homodimer and heterodimers.

The protein resides in the cell membrane. This chain is CASP-like protein 1, found in Panax ginseng (Korean ginseng).